The sequence spans 328 residues: D-cysteine desulfhydrase (328 aa).

The residue at position 51 (lysine 51) is an N6-(pyridoxal phosphate)lysine.

This sequence belongs to the ACC deaminase/D-cysteine desulfhydrase family. Homodimer. It depends on pyridoxal 5'-phosphate as a cofactor.

It carries out the reaction D-cysteine + H2O = hydrogen sulfide + pyruvate + NH4(+) + H(+). Functionally, catalyzes the alpha,beta-elimination reaction of D-cysteine and of several D-cysteine derivatives. It could be a defense mechanism against D-cysteine. The sequence is that of D-cysteine desulfhydrase from Escherichia fergusonii (strain ATCC 35469 / DSM 13698 / CCUG 18766 / IAM 14443 / JCM 21226 / LMG 7866 / NBRC 102419 / NCTC 12128 / CDC 0568-73).